The following is a 367-amino-acid chain: D-alanine--D-alanine ligase (367 aa).

The ATP-grasp domain occupies 139 to 340; sequence KLILKEKNIP…FSQVIDNMIS (202 aa). 169 to 224 provides a ligand contact to ATP; that stretch reads KEVLEYPMIVKPARLGSSIGVKKVNDKCELEEAIETAFSFDDKVIVEKWIDSRELN. Mg(2+) contacts are provided by Asp-298, Glu-311, and Asn-313.

This sequence belongs to the D-alanine--D-alanine ligase family. Mg(2+) is required as a cofactor. It depends on Mn(2+) as a cofactor.

The protein resides in the cytoplasm. It catalyses the reaction 2 D-alanine + ATP = D-alanyl-D-alanine + ADP + phosphate + H(+). The protein operates within cell wall biogenesis; peptidoglycan biosynthesis. Cell wall formation. The polypeptide is D-alanine--D-alanine ligase (Thermosipho africanus (strain TCF52B)).